Reading from the N-terminus, the 457-residue chain is Glutamate--tRNA ligase 2 (457 aa).

Positions 9 to 19 (PSPTGYIHIGN) match the 'HIGH' region motif. The short motif at 250–254 (GLSKR) is the 'KMSKS' region element. K253 contacts ATP.

This sequence belongs to the class-I aminoacyl-tRNA synthetase family. Glutamate--tRNA ligase type 1 subfamily. Monomer.

It localises to the cytoplasm. It catalyses the reaction tRNA(Glu) + L-glutamate + ATP = L-glutamyl-tRNA(Glu) + AMP + diphosphate. Its function is as follows. Catalyzes the attachment of glutamate to tRNA(Glu) in a two-step reaction: glutamate is first activated by ATP to form Glu-AMP and then transferred to the acceptor end of tRNA(Glu). This is Glutamate--tRNA ligase 2 from Brucella melitensis biotype 1 (strain ATCC 23456 / CCUG 17765 / NCTC 10094 / 16M).